The sequence spans 762 residues: Probable inorganic carbon transporter subunit DabA (762 aa).

Zn(2+) contacts are provided by cysteine 279, aspartate 281, histidine 461, and cysteine 476.

It belongs to the inorganic carbon transporter (TC 9.A.2) DabA family. As to quaternary structure, forms a complex with DabB. Zn(2+) is required as a cofactor.

Its subcellular location is the cell inner membrane. Part of an energy-coupled inorganic carbon pump. This chain is Probable inorganic carbon transporter subunit DabA, found in Legionella pneumophila (strain Corby).